The sequence spans 622 residues: 1-deoxy-D-xylulose-5-phosphate synthase (622 aa).

Residues His74 and 115-117 (GHS) contribute to the thiamine diphosphate site. Asp146 is a Mg(2+) binding site. Residues 147–148 (GA), Asn175, Tyr286, and Glu366 contribute to the thiamine diphosphate site. Mg(2+) is bound at residue Asn175.

The protein belongs to the transketolase family. DXPS subfamily. Homodimer. It depends on Mg(2+) as a cofactor. The cofactor is thiamine diphosphate.

It carries out the reaction D-glyceraldehyde 3-phosphate + pyruvate + H(+) = 1-deoxy-D-xylulose 5-phosphate + CO2. Its pathway is metabolic intermediate biosynthesis; 1-deoxy-D-xylulose 5-phosphate biosynthesis; 1-deoxy-D-xylulose 5-phosphate from D-glyceraldehyde 3-phosphate and pyruvate: step 1/1. Functionally, catalyzes the acyloin condensation reaction between C atoms 2 and 3 of pyruvate and glyceraldehyde 3-phosphate to yield 1-deoxy-D-xylulose-5-phosphate (DXP). This chain is 1-deoxy-D-xylulose-5-phosphate synthase, found in Carboxydothermus hydrogenoformans (strain ATCC BAA-161 / DSM 6008 / Z-2901).